Consider the following 408-residue polypeptide: uncharacterized protein (408 aa).

The segment covering 376–386 (NELNDPNSVYN) has biased composition (polar residues). The tract at residues 376-408 (NELNDPNSVYNSPEFDHQGDQKKLTEENGCVVQ) is disordered. A compositionally biased stretch (basic and acidic residues) spans 389-401 (EFDHQGDQKKLTE).

This is an uncharacterized protein from Acanthamoeba polyphaga (Amoeba).